Here is a 115-residue protein sequence, read N- to C-terminus: Inner membrane protein YidH (115 aa).

The Cytoplasmic segment spans residues 1 to 30 (MKISRLGEAPDYRFSLANERTFLAWIRTAL). The chain crosses the membrane as a helical span at residues 31–51 (GFLAAGVGLDQLAPDFATPVI). Residues 52-53 (RE) are Periplasmic-facing. A helical membrane pass occupies residues 54-74 (LLALLLCLFSGGLAMYGYLRW). Residues 75 to 92 (LRNEKAMRLKEDLPYTNS) are Cytoplasmic-facing. A helical transmembrane segment spans residues 93–113 (LLIISLILMVVAVIVMGLVLY). Topologically, residues 114-115 (AG) are periplasmic.

To M.tuberculosis Rv2272.

It localises to the cell inner membrane. The protein is Inner membrane protein YidH (yidH) of Escherichia coli O157:H7.